Here is a 429-residue protein sequence, read N- to C-terminus: 3-isopropylmalate dehydratase large subunit (429 aa).

3 residues coordinate [4Fe-4S] cluster: Cys-303, Cys-363, and Cys-366.

This sequence belongs to the aconitase/IPM isomerase family. LeuC type 2 subfamily. In terms of assembly, heterodimer of LeuC and LeuD. [4Fe-4S] cluster serves as cofactor.

The enzyme catalyses (2R,3S)-3-isopropylmalate = (2S)-2-isopropylmalate. The protein operates within amino-acid biosynthesis; L-leucine biosynthesis; L-leucine from 3-methyl-2-oxobutanoate: step 2/4. Catalyzes the isomerization between 2-isopropylmalate and 3-isopropylmalate, via the formation of 2-isopropylmaleate. This chain is 3-isopropylmalate dehydratase large subunit, found in Caldicellulosiruptor bescii (strain ATCC BAA-1888 / DSM 6725 / KCTC 15123 / Z-1320) (Anaerocellum thermophilum).